The sequence spans 4924 residues: Hydroxamate-type ferrichrome siderophore peptide synthetase (4924 aa).

Carrier domains are found at residues 715–791 (NQSE…ILLK), 2172–2246 (DGFQ…KRRR), 3254–3328 (NVVE…NTQT), and 4402–4478 (IHLN…QYEK). Residues Ser752, Ser2206, Ser3288, and Ser4439 each carry the O-(pantetheine 4'-phosphoryl)serine modification.

Belongs to the ATP-dependent AMP-binding enzyme family.

Its subcellular location is the cytoplasm. Functionally, involved in intracellular and extracellular ferrichrome siderophore biosynthesis. The protein is Hydroxamate-type ferrichrome siderophore peptide synthetase (sib1) of Schizosaccharomyces pombe (strain 972 / ATCC 24843) (Fission yeast).